Here is a 100-residue protein sequence, read N- to C-terminus: Small ribosomal subunit protein uS14c (100 aa).

The protein belongs to the universal ribosomal protein uS14 family. Part of the 30S ribosomal subunit.

It localises to the plastid. The protein resides in the chloroplast. In terms of biological role, binds 16S rRNA, required for the assembly of 30S particles. In Emiliania huxleyi (Coccolithophore), this protein is Small ribosomal subunit protein uS14c.